The chain runs to 374 residues: Probable neutral protease 2 homolog TRV_05367 (374 aa).

The first 19 residues, 1 to 19 (MQVIVALAALGSLAAPALG), serve as a signal peptide directing secretion. A propeptide spanning residues 20–189 (FSIPRGVPVS…RGPLTRINKR (170 aa)) is cleaved from the precursor. Disulfide bonds link cysteine 197/cysteine 267 and cysteine 274/cysteine 292. Histidine 317 lines the Zn(2+) pocket. Residue glutamate 318 is part of the active site. Zn(2+)-binding residues include histidine 321 and aspartate 332.

This sequence belongs to the peptidase M35 family. It depends on Zn(2+) as a cofactor.

It localises to the secreted. It carries out the reaction Preferential cleavage of bonds with hydrophobic residues in P1'. Also 3-Asn-|-Gln-4 and 8-Gly-|-Ser-9 bonds in insulin B chain.. In terms of biological role, probable secreted metalloprotease that shows high activities on basic nuclear substrates such as histone and protamine. May be involved in virulence. This is Probable neutral protease 2 homolog TRV_05367 from Trichophyton verrucosum (strain HKI 0517).